We begin with the raw amino-acid sequence, 344 residues long: Outer membrane protein A (344 aa).

The Periplasmic portion of the chain corresponds to 1–14 (MKAIFVLNAAPKDN). Residues 15–24 (TWYAGGKLGW) form a beta stranded membrane-spanning segment. Residues 25 to 49 (SQYHDTGFYGNGFQNNNGPTRNDQL) lie on the Extracellular side of the membrane. The beta stranded transmembrane segment at 50 to 59 (GAGAFGGYQV) threads the bilayer. The Periplasmic segment spans residues 60–62 (NPY). The chain crosses the membrane as a beta stranded span at residues 63-71 (LGFEMGYDW). Residues 72–89 (LGRMAYKGSVDNGAFKAQ) lie on the Extracellular side of the membrane. Residues 90–100 (GVQLTAKLGYP) traverse the membrane as a beta stranded segment. Residues 101–104 (ITDD) lie on the Periplasmic side of the membrane. The beta stranded transmembrane segment at 105–114 (LDIYTRLGGM) threads the bilayer. Over 115–139 (VWRADSKGNYASTGVSRSEHDTGVS) the chain is Extracellular. The chain crosses the membrane as a beta stranded span at residues 140-149 (PVFAGGVEWA). The Periplasmic segment spans residues 150–153 (VTRD). The beta stranded transmembrane segment at 154-162 (IATRLEYQW) threads the bilayer. At 163 to 179 (VNNIGDAGTVGTRPDNG) the chain is on the extracellular side. Residues 180-188 (MLSLGVSYR) form a beta stranded membrane-spanning segment. Residues 189 to 344 (FGQEDAAPVV…YKEVVTQPQA (156 aa)) lie on the Periplasmic side of the membrane. 4 tandem repeats follow at residues 199-200 (AP), 201-202 (AP), 203-204 (AP), and 205-206 (AP). Positions 199 to 206 (APAPAPAP) are 4 X 2 AA tandem repeats of A-P. An OmpA-like domain is found at 208–336 (VATKHFTLKS…RVEIEVKGYK (129 aa)). A disulfide bridge connects residues cysteine 309 and cysteine 321.

This sequence belongs to the outer membrane OOP (TC 1.B.6) superfamily. OmpA family. As to quaternary structure, monomer and homodimer.

It localises to the cell outer membrane. In terms of biological role, with TolR probably plays a role in maintaining the position of the peptidoglycan cell wall in the periplasm. Acts as a porin with low permeability that allows slow penetration of small solutes; an internal gate slows down solute passage. Required for conjugation with F-type plasmids; probably serves as the mating receptor on recipient cells. This is Outer membrane protein A from Klebsiella pneumoniae.